The chain runs to 445 residues: ATP-dependent protease ATPase subunit HslU (445 aa).

ATP contacts are provided by residues isoleucine 17, 59–64 (GVGKTE), aspartate 254, glutamate 319, and arginine 391.

This sequence belongs to the ClpX chaperone family. HslU subfamily. As to quaternary structure, a double ring-shaped homohexamer of HslV is capped on each side by a ring-shaped HslU homohexamer. The assembly of the HslU/HslV complex is dependent on binding of ATP.

The protein localises to the cytoplasm. Functionally, ATPase subunit of a proteasome-like degradation complex; this subunit has chaperone activity. The binding of ATP and its subsequent hydrolysis by HslU are essential for unfolding of protein substrates subsequently hydrolyzed by HslV. HslU recognizes the N-terminal part of its protein substrates and unfolds these before they are guided to HslV for hydrolysis. The protein is ATP-dependent protease ATPase subunit HslU of Pseudomonas syringae pv. tomato (strain ATCC BAA-871 / DC3000).